The chain runs to 1888 residues: Eukaryotic translation initiation factor 4G (1888 aa).

Disordered regions lie at residues 1–259 (MSFN…PTTP), 391–420 (FDNK…TQPL), 449–662 (PLPS…SLQH), 726–761 (VAHS…KNSE), 838–903 (ADVS…DGEV), 961–1042 (AYKR…SGDR), 1083–1138 (TNVS…DPRL), 1331–1356 (GERE…EREE), 1462–1605 (KWQQ…PGDL), and 1639–1691 (RFAG…PSLP). 2 stretches are compositionally biased toward polar residues: residues 13-36 (GYTQ…SGTH) and 75-84 (VNSTDSSNAP). Basic and acidic residues predominate over residues 171 to 183 (DEQKRDQARHESF). Residues 185–195 (PVPPMPIPLAP) are compositionally biased toward pro residues. Polar residues-rich tracts occupy residues 211 to 231 (NVGQ…NTGD), 244 to 259 (ASPN…PTTP), 393 to 405 (NKQS…TGTS), and 458 to 475 (NSQP…SQNV). The segment covering 497–506 (PNREHTRDTH) has biased composition (basic and acidic residues). A compositionally biased stretch (polar residues) spans 586-596 (IKSSPVISKQF). Residues 603–630 (VSLESQDSSSVQSSLTASSEESELAVAH) show a composition bias toward low complexity. Basic and acidic residues predominate over residues 631 to 645 (SEVRRENLLGSDLHK). The segment covering 840-850 (VSASVSSSSTV) has biased composition (low complexity). Polar residues predominate over residues 869–885 (NMSSNEVLKNVVKSDQP). Residues 963–983 (KRPEEKKETVAHSESIERTES) are compositionally biased toward basic and acidic residues. The interval 1048 to 1093 (KKYSRDFLLKFAEQFLDLPHNFEVTSDIESLMSTHTNVSHHHDRDP) is EIF4E-binding. The span at 1109 to 1124 (RLDRRGSNLVDDDRWS) shows a compositional bias: basic and acidic residues. The MIF4G domain occupies 1239–1462 (QRQLKAILNK…KDAIDLRKNK (224 aa)). Basic and acidic residues-rich tracts occupy residues 1467–1484 (RKVE…DAAQ) and 1661–1674 (KDLR…DRSR). The MI domain occupies 1700-1824 (RLQQLSLTAI…SLREVADLIC (125 aa)).

Belongs to the eukaryotic initiation factor 4G family. In terms of assembly, EIF4F is a multi-subunit complex, the composition of which varies with external and internal environmental conditions. It is composed of at least EIF4A, EIF4E and EIF4G. Interacts directly with eIF4E. In higher plants two isoforms of EIF4F have been identified, named isoform EIF4F and isoform EIF(iso)4F. Isoform EIF4F has subunits p220 and p26, whereas isoform EIF(iso)4F has subunits p82 and p28.

In terms of biological role, component of the protein complex eIF4F, which is involved in the recognition of the mRNA cap, ATP-dependent unwinding of 5'-terminal secondary structure and recruitment of mRNA to the ribosome. The polypeptide is Eukaryotic translation initiation factor 4G (Cucumis melo (Muskmelon)).